Reading from the N-terminus, the 121-residue chain is Large ribosomal subunit protein uL18c (121 aa).

This sequence belongs to the universal ribosomal protein uL18 family. As to quaternary structure, part of the 50S ribosomal subunit; contacts the 5S rRNA.

The protein localises to the plastid. It is found in the cyanelle. Its function is as follows. Binds 5S rRNA, forms part of the central protuberance of the 50S subunit. In Cyanophora paradoxa, this protein is Large ribosomal subunit protein uL18c (rpl18).